Here is a 496-residue protein sequence, read N- to C-terminus: Hexokinase-1 (496 aa).

Residues 4 to 24 (VAVGATVVCTAAVCAVAVLVV) traverse the membrane as a helical segment. Positions 35-487 (GRVLAILKAF…SGIGAALLAA (453 aa)) constitute a Hexokinase domain. A hexokinase small subdomain region spans residues 90-228 (SGDEKGLFYA…GLDMRIAALV (139 aa)). Gly-104, Thr-105, and Asn-106 together coordinate ADP. The D-glucose site is built by Thr-194, Lys-195, Asn-229, and Asp-230. A hexokinase large subdomain region spans residues 229–476 (NDTVGTLAGG…GSVEVTHSND (248 aa)). ADP is bound at residue Thr-253. Asn-256, Glu-284, and Glu-315 together coordinate D-glucose. Position 441 (Gly-441) interacts with ADP.

This sequence belongs to the hexokinase family. Interacts with RPT5B in nucleus. Interacts with RHIP1. Interacts with KING1 in mitochondria. Interacts with CLF (via SANT domain) and EZA1/SWN (via SANT domain) in nucleus. Highly expressed in flowers and siliques, at intermediate levels in roots and stems, and at lower levels in rosette and cauline leaves.

The protein localises to the mitochondrion outer membrane. The protein resides in the nucleus. It catalyses the reaction a D-hexose + ATP = a D-hexose 6-phosphate + ADP + H(+). The catalysed reaction is D-fructose + ATP = D-fructose 6-phosphate + ADP + H(+). The enzyme catalyses D-glucose + ATP = D-glucose 6-phosphate + ADP + H(+). The protein operates within carbohydrate metabolism; hexose metabolism. It participates in carbohydrate degradation; glycolysis; D-glyceraldehyde 3-phosphate and glycerone phosphate from D-glucose: step 1/4. Its function is as follows. Fructose and glucose phosphorylating enzyme. May be involved in the phosphorylation of glucose during the export from mitochondrion to cytosol. Acts as a sugar sensor which may regulate sugar-dependent gene repression or activation. Mediates the effects of sugar on plant growth and development independently of its catalytic activity or the sugar metabolism. May regulate the execution of program cell death in plant cells. Promotes roots and leaves growth. Together with sugar, is involved in the regulation of the expression of aquaporin genes, and reduces leaf water conductance, to coordinate sugar levels with the loss of water through transpiration. Regulates cell proliferation and expansion early during leaf development. Involved in sucrose-induced leaf growth stimulation independently of GPT2. May participate to the stimulation of hypocotyl elongation under long-day (LD) conditions. Forms a nuclear complex with CLF and EZA1/SWN to target common glucose-responsive genes and regulate glucose signaling. Is required for CLF- and EZA1/SWN-mediated histone H3 trimethylation on 'Lys-27' (H3K27me3) and glucose-mediated gene repression. The chain is Hexokinase-1 from Arabidopsis thaliana (Mouse-ear cress).